We begin with the raw amino-acid sequence, 297 residues long: F-box only protein 2 (297 aa).

The segment at 1-47 is disordered; it reads MDGDGDPESVSHPEEASPEEQPEEAGAEASAEEEQLREAEEEEEAEA. Residues 16-47 are compositionally biased toward acidic residues; sequence ASPEEQPEEAGAEASAEEEQLREAEEEEEAEA. An F-box domain is found at 48-95; that stretch reads VEYLAELPEPLLLRVLAELPATELVQACRLVCLRWKELVDGAPLWLLK. Ser106 carries the phosphoserine modification. The FBA domain occupies 117-297; the sequence is FYFLSKRRRN…VTNSSVWVEP (181 aa). A carbohydrate contacts are provided by residues 214-216 and 279-280; these read RTD and YW.

As to quaternary structure, component of the SCF(FBXO2) complex consisting of CUL1, RBX1, SKP1 and FBXO2. Predominantly detected as heterodimer with SKP1; the heterodimer with SKP1 is not part of the SCF(FBXO2) complex. Detected in brain and cochlea, in epithelial support cells and hair cells of the organ of Corti (at protein level).

It is found in the cytoplasm. The protein resides in the microsome membrane. The protein operates within protein modification; protein ubiquitination. Functionally, substrate recognition component of a SCF (SKP1-CUL1-F-box protein) E3 ubiquitin-protein ligase complex that mediates the ubiquitination and subsequent proteasomal degradation of target proteins. Involved in the endoplasmic reticulum-associated degradation pathway (ERAD) for misfolded lumenal proteins by recognizing and binding sugar chains on unfolded glycoproteins that are retrotranslocated into the cytosol and promoting their ubiquitination and subsequent degradation. Prevents formation of cytosolic aggregates of unfolded glycoproteins that have been retrotranslocated into the cytosol. Able to recognize and bind denatured glycoproteins, preferentially those of the high-mannose type. This Mus musculus (Mouse) protein is F-box only protein 2 (Fbxo2).